The chain runs to 142 residues: Gonadotropin subunit beta-2 (142 aa).

The N-terminal stretch at 1–23 is a signal peptide; sequence MLGLHVGTLISLFLCILLEPIEG. Disulfide bonds link Cys29/Cys77, Cys43/Cys92, Cys46/Cys130, Cys54/Cys108, Cys58/Cys110, and Cys113/Cys120. Asn33 is a glycosylation site (N-linked (GlcNAc...) asparagine).

It belongs to the glycoprotein hormones subunit beta family. In terms of assembly, heterodimer of an alpha and a beta chain.

It is found in the secreted. Functionally, involved in gametogenesis and steroidogenesis. The polypeptide is Gonadotropin subunit beta-2 (cgbb) (Oncorhynchus tshawytscha (Chinook salmon)).